Here is a 944-residue protein sequence, read N- to C-terminus: Translation initiation factor IF-2 (944 aa).

A disordered region spans residues 61–281 (IQANQPAKNP…TAKNNKSHKI (221 aa)). The segment covering 132–150 (TFENQTPPTENTPKVVSHS) has biased composition (polar residues). Residues 151–169 (QIEKAKQKLQEIQKSREAL) are compositionally biased toward basic and acidic residues. The span at 175-185 (SNANNASNTNN) shows a compositional bias: low complexity. A compositionally biased stretch (basic and acidic residues) spans 186–203 (AKKEISEVKKQEQEIKRH). Positions 204 to 215 (ENIKRRTGFRVI) are enriched in basic residues. Residues 244 to 259 (EDIKKEWQEKDKQEAK) are compositionally biased toward basic and acidic residues. Positions 443–612 (ERPPVVTIMG…LIQADIMELK (170 aa)) constitute a tr-type G domain. The interval 452–459 (GHVDHGKT) is G1. 452–459 (GHVDHGKT) is a binding site for GTP. Positions 477–481 (GITQH) are G2. The G3 stretch occupies residues 498 to 501 (DTPG). Residues 498–502 (DTPGH) and 552–555 (NKMD) each bind GTP. The segment at 552-555 (NKMD) is G4. The tract at residues 588-590 (SAK) is G5.

It belongs to the TRAFAC class translation factor GTPase superfamily. Classic translation factor GTPase family. IF-2 subfamily.

The protein localises to the cytoplasm. In terms of biological role, one of the essential components for the initiation of protein synthesis. Protects formylmethionyl-tRNA from spontaneous hydrolysis and promotes its binding to the 30S ribosomal subunits. Also involved in the hydrolysis of GTP during the formation of the 70S ribosomal complex. The sequence is that of Translation initiation factor IF-2 from Helicobacter pylori (strain HPAG1).